The sequence spans 93 residues: Small ribosomal subunit protein uS19 (93 aa).

The interval 74–93 (FSPTRTFRGHVKDDRKSKRR) is disordered. The segment covering 83 to 93 (HVKDDRKSKRR) has biased composition (basic and acidic residues).

Belongs to the universal ribosomal protein uS19 family.

Its function is as follows. Protein S19 forms a complex with S13 that binds strongly to the 16S ribosomal RNA. In Streptomyces griseus subsp. griseus (strain JCM 4626 / CBS 651.72 / NBRC 13350 / KCC S-0626 / ISP 5235), this protein is Small ribosomal subunit protein uS19.